We begin with the raw amino-acid sequence, 601 residues long: uncharacterized protein (601 aa).

A signal peptide spans 1-24; sequence MKLSSLPSGLGLASLLGLISSATA.

Its subcellular location is the membrane. This is an uncharacterized protein from Schizosaccharomyces pombe (strain 972 / ATCC 24843) (Fission yeast).